We begin with the raw amino-acid sequence, 129 residues long: Ig kappa chain V-IV region S107B (129 aa).

Positions 1–22 (MDLQVQIIXFLLISVTVIMSRG) are cleaved as a signal peptide. Residues 23-45 (ENVLTQSPAIMAASLGQKVTMTC) are framework-1. Cys45 and Cys111 are disulfide-bonded. Positions 46 to 57 (SASSSVSSSYLH) are complementarity-determining-1. Residues 58-72 (WYQQKSGASPKPLIH) form a framework-2 region. Positions 73 to 79 (RTSNLAS) are complementarity-determining-2. The segment at 80–111 (GVPARFSGSGSGTSYSLTISSVEAEDDATYYC) is framework-3. Positions 112–118 (QQWSGYP) are complementarity-determining-3. Positions 119-128 (FGSGTKLEIK) are framework-4.

The protein is Ig kappa chain V-IV region S107B of Mus musculus (Mouse).